The primary structure comprises 405 residues: S-adenosylmethionine synthase (405 aa).

139 to 144 serves as a coordination point for ATP; that stretch reads GQGSVD.

This sequence belongs to the AdoMet synthase 2 family. The cofactor is Mg(2+).

It catalyses the reaction L-methionine + ATP + H2O = S-adenosyl-L-methionine + phosphate + diphosphate. It functions in the pathway amino-acid biosynthesis; S-adenosyl-L-methionine biosynthesis; S-adenosyl-L-methionine from L-methionine: step 1/1. Functionally, catalyzes the formation of S-adenosylmethionine from methionine and ATP. The polypeptide is S-adenosylmethionine synthase (Thermococcus gammatolerans (strain DSM 15229 / JCM 11827 / EJ3)).